Here is a 92-residue protein sequence, read N- to C-terminus: Small ribosomal subunit protein uS19 (92 aa).

The protein belongs to the universal ribosomal protein uS19 family.

In terms of biological role, protein S19 forms a complex with S13 that binds strongly to the 16S ribosomal RNA. In Corynebacterium efficiens (strain DSM 44549 / YS-314 / AJ 12310 / JCM 11189 / NBRC 100395), this protein is Small ribosomal subunit protein uS19.